Reading from the N-terminus, the 174-residue chain is Large ribosomal subunit protein uL6 (174 aa).

This sequence belongs to the universal ribosomal protein uL6 family. In terms of assembly, part of the 50S ribosomal subunit.

Its function is as follows. This protein binds to the 23S rRNA, and is important in its secondary structure. It is located near the subunit interface in the base of the L7/L12 stalk, and near the tRNA binding site of the peptidyltransferase center. This is Large ribosomal subunit protein uL6 from Acidithiobacillus ferrooxidans (strain ATCC 23270 / DSM 14882 / CIP 104768 / NCIMB 8455) (Ferrobacillus ferrooxidans (strain ATCC 23270)).